An 864-amino-acid polypeptide reads, in one-letter code: NT-3 growth factor receptor (864 aa).

A signal peptide spans 1 to 31; sequence MDVSLCPAKCSFWRIFLLGSVWLDYVGSVLA. Cystine bridges form between cysteine 32–cysteine 38 and cysteine 36–cysteine 45. At 32–429 the chain is on the extracellular side; that stretch reads CPANCVCSKT…TVTHKPEEDT (398 aa). Asparagine 68, asparagine 72, and asparagine 79 each carry an N-linked (GlcNAc...) asparagine glycan. LRR repeat units lie at residues 104–125 and 128–149; these read GLQK…AFAK and HLRY…LFQT. N-linked (GlcNAc...) asparagine glycans are attached at residues asparagine 133 and asparagine 163. One can recognise an LRRCT domain in the interval 160-209; sequence NFFNCSCDIRWMQLWQEQGEARLDSQSLYCISADGSQLPLFRMNISQCDL. 2 disulfides stabilise this stretch: cysteine 164–cysteine 189 and cysteine 166–cysteine 207. N-linked (GlcNAc...) asparagine glycans are attached at residues asparagine 203, asparagine 218, asparagine 232, asparagine 259, asparagine 267, asparagine 272, and asparagine 294. Ig-like C2-type domains follow at residues 210–300 and 309–382; these read PEIS…VALT and SLVE…IAKN. Cysteine 231 and cysteine 284 form a disulfide bridge. The cysteines at positions 320 and 362 are disulfide-linked. Asparagine 375 and asparagine 388 each carry an N-linked (GlcNAc...) asparagine glycan. Residues 430-453 traverse the membrane as a helical segment; the sequence is FGVSIAVGLAAFACVLLVVLFIMI. At 454 to 864 the chain is on the cytoplasmic side; sequence NKYGRRSKFG…ATPIYLDILG (411 aa). Residue serine 493 is modified to Phosphoserine. Tyrosine 516 carries the post-translational modification Phosphotyrosine; by autocatalysis. The Protein kinase domain maps to 538–853; it reads IVLKRELGEG…EIYKILHALG (316 aa). ATP contacts are provided by residues 544 to 552 and lysine 572; that span reads LGEGAFGKV. Aspartate 679 (proton acceptor) is an active-site residue. Residues tyrosine 705, tyrosine 709, tyrosine 710, and tyrosine 859 each carry the phosphotyrosine; by autocatalysis modification.

Belongs to the protein kinase superfamily. Tyr protein kinase family. Insulin receptor subfamily. Exists in a dynamic equilibrium between monomeric (low affinity) and dimeric (high affinity) structures. Binds SH2B2. Interacts with SQSTM1 and KIDINS220. Interacts with PTPRS. Interacts with MAPK8IP3/JIP3. Ligand-mediated auto-phosphorylation. In terms of tissue distribution, widely expressed, mainly in the nervous tissue.

Its subcellular location is the membrane. It catalyses the reaction L-tyrosyl-[protein] + ATP = O-phospho-L-tyrosyl-[protein] + ADP + H(+). Receptor tyrosine kinase involved in nervous system and probably heart development. Upon binding of its ligand NTF3/neurotrophin-3, NTRK3 autophosphorylates and activates different signaling pathways, including the phosphatidylinositol 3-kinase/AKT and the MAPK pathways, that control cell survival and differentiation. NTRK3 isoforms containing insertions within the kinase domain can autophosphorylate in response to NTF3/neurotrophin-3, but cannot mediate downstream phenotypic responses. This chain is NT-3 growth factor receptor (Ntrk3), found in Rattus norvegicus (Rat).